We begin with the raw amino-acid sequence, 380 residues long: Protein Wnt-5a (380 aa).

A signal peptide spans 1–35 (MKKSIGILSPGVALGTAGSAMSSKFFVMALAVFFS). The propeptide occupies 36–61 (FAQVVIEANSWWSLGMNNPVQMSEVY). The cysteines at positions 104 and 115 are disulfide-linked. N-linked (GlcNAc...) asparagine glycosylation is found at asparagine 114 and asparagine 120. Intrachain disulfides connect cysteine 154–cysteine 162, cysteine 164–cysteine 182, cysteine 238–cysteine 252, cysteine 240–cysteine 247, cysteine 309–cysteine 340, cysteine 325–cysteine 335, cysteine 339–cysteine 379, cysteine 355–cysteine 370, cysteine 357–cysteine 367, and cysteine 362–cysteine 363. Serine 244 carries O-palmitoleoyl serine; by PORCN lipidation. 2 N-linked (GlcNAc...) asparagine glycosylation sites follow: asparagine 312 and asparagine 326.

This sequence belongs to the Wnt family. Forms a soluble 1:1 complex with AFM; this prevents oligomerization and is required for prolonged biological activity. The complex with AFM may represent the physiological form in body fluids. Homooligomer; disulfide-linked, leading to inactivation (in vitro). Interacts with PORCN. Interacts with WLS. Interacts with glypican GCP3. Interacts with PKD1 (via extracellular domain). Interacts with TMEM67. In terms of processing, glycosylation is necessary for secretion but not for activity. Post-translationally, palmitoleoylation is required for efficient binding to frizzled receptors. Depalmitoleoylation leads to Wnt signaling pathway inhibition. Proteolytic processing by TIKI1 and TIKI2 promotes oxidation and formation of large disulfide-bond oligomers, leading to inactivation of WNT5A.

The protein resides in the secreted. Its subcellular location is the extracellular space. It localises to the extracellular matrix. Its function is as follows. Ligand for members of the frizzled family of seven transmembrane receptors. Can activate or inhibit canonical Wnt signaling, depending on receptor context. In the presence of FZD4, activates beta-catenin signaling. In the presence of ROR2, inhibits the canonical Wnt pathway by promoting beta-catenin degradation through a GSK3-independent pathway which involves down-regulation of beta-catenin-induced reporter gene expression. Suppression of the canonical pathway allows chondrogenesis to occur. Inhibits tumor formation. Stimulates cell migration. Decreases proliferation, migration, invasiveness and clonogenicity of carcinoma cells and may act as a tumor suppressor. Mediates motility of melanoma cells. Required during embryogenesis for extension of the primary anterior-posterior axis and for outgrowth of limbs and the genital tubercle. Inhibits type II collagen expression in chondrocytes. The polypeptide is Protein Wnt-5a (Oryctolagus cuniculus (Rabbit)).